The chain runs to 303 residues: Paired immunoglobulin-like type 2 receptor alpha (303 aa).

The first 19 residues, 1 to 19 (MGRPLLLPLLPLLLPPAFL), serve as a signal peptide directing secretion. The Extracellular portion of the chain corresponds to 20–197 (QPSGSTGSGP…DSWHISLETA (178 aa)). The Ig-like V-type domain maps to 32–150 (LYGVTQPKHL…SIEGTKLSIT (119 aa)). Residue Asn100 is glycosylated (N-linked (GlcNAc...) asparagine). Residues 198 to 218 (VGVAVAVTVLGIMILGLICLL) form a helical membrane-spanning segment. Topologically, residues 219–303 (RWRRRKGQQR…NETLYSVLKA (85 aa)) are cytoplasmic. Positions 226–296 (QQRTKATTPA…RPLKSPQNET (71 aa)) are disordered. 2 consecutive short sequence motifs (ITIM motif) follow at residues 267–272 (IVYASL) and 296–301 (TLYSVL).

Monomer. Interacts with PTPN6/SHP-1 and PTPN11/SHP-2 upon tyrosine phosphorylation. As to quaternary structure, (Microbial infection) Interacts with herpes simplex virus 1 glycoprotein B. In terms of processing, according to PubMed:10660620, N- and O-glycosylated. According to PubMed:10903717, only N-glycosylated. Phosphorylated on tyrosine residues. In terms of tissue distribution, predominantly detected in hemopoietic tissues and is expressed by monocytes, macrophages, and granulocytes, but not by lymphocytes. Also strongly expressed by dendritic cells (DC); preferentially by CD14+/CD1a- DC derived from CD34+ progenitors. Also expressed by CD11c+ blood and tonsil DC, but not by CD11c- DC precursors.

Its subcellular location is the cell membrane. It localises to the secreted. Paired receptors consist of highly related activating and inhibitory receptors and are widely involved in the regulation of the immune system. PILRA is thought to act as a cellular signaling inhibitory receptor by recruiting cytoplasmic phosphatases like PTPN6/SHP-1 and PTPN11/SHP-2 via their SH2 domains that block signal transduction through dephosphorylation of signaling molecules. Receptor for PIANP. Functionally, (Microbial infection) Acts as an entry co-receptor for herpes simplex virus 1. In Homo sapiens (Human), this protein is Paired immunoglobulin-like type 2 receptor alpha (PILRA).